A 252-amino-acid polypeptide reads, in one-letter code: Type III pantothenate kinase (252 aa).

6–13 (DIGNTTTE) lines the ATP pocket. Substrate-binding positions include Y100 and 107 to 110 (GADR). Residue D109 is the Proton acceptor of the active site. K(+) is bound at residue D129. T132 is an ATP binding site. Residue T184 participates in substrate binding.

It belongs to the type III pantothenate kinase family. As to quaternary structure, homodimer. It depends on NH4(+) as a cofactor. K(+) is required as a cofactor.

The protein resides in the cytoplasm. The catalysed reaction is (R)-pantothenate + ATP = (R)-4'-phosphopantothenate + ADP + H(+). Its pathway is cofactor biosynthesis; coenzyme A biosynthesis; CoA from (R)-pantothenate: step 1/5. Functionally, catalyzes the phosphorylation of pantothenate (Pan), the first step in CoA biosynthesis. The protein is Type III pantothenate kinase of Sulfurihydrogenibium sp. (strain YO3AOP1).